The primary structure comprises 723 residues: Catalase-peroxidase (723 aa).

The segment at residues 89–212 is a cross-link (tryptophyl-tyrosyl-methioninium (Trp-Tyr) (with M-238)); the sequence is WHSAGTYRTG…LAAVQMGLIY (124 aa). The active-site Proton acceptor is histidine 90. A cross-link (tryptophyl-tyrosyl-methioninium (Tyr-Met) (with W-89)) is located at residues 212–238; the sequence is YVNPEGPNGDPDPFAAAVDIRETFARM. Heme b is bound at residue histidine 253.

It belongs to the peroxidase family. Peroxidase/catalase subfamily. In terms of assembly, homodimer or homotetramer. It depends on heme b as a cofactor. Post-translationally, formation of the three residue Trp-Tyr-Met cross-link is important for the catalase, but not the peroxidase activity of the enzyme.

It catalyses the reaction H2O2 + AH2 = A + 2 H2O. The enzyme catalyses 2 H2O2 = O2 + 2 H2O. Its function is as follows. Bifunctional enzyme with both catalase and broad-spectrum peroxidase activity. The sequence is that of Catalase-peroxidase from Shewanella baltica (strain OS185).